We begin with the raw amino-acid sequence, 614 residues long: Subtilin transport ATP-binding protein SpaT (614 aa).

The next 5 membrane-spanning stretches (helical) occupy residues F34 to I54, V69 to I89, I147 to F167, V175 to Q195, and I267 to G287. In terms of domain architecture, ABC transmembrane type-1 spans F34 to N320. The ABC transporter domain occupies V353–S593. G387–K394 is an ATP binding site.

This sequence belongs to the ABC transporter superfamily.

The protein localises to the cell membrane. Its function is as follows. Probably implicated in the export process of the lantibiotic subtilin. This chain is Subtilin transport ATP-binding protein SpaT (spaT), found in Bacillus subtilis.